A 572-amino-acid chain; its full sequence is Phosphoenolpyruvate-protein phosphotransferase (572 aa).

His-191 (tele-phosphohistidine intermediate) is an active-site residue. Phosphoenolpyruvate contacts are provided by Arg-298 and Arg-334. 2 residues coordinate Mg(2+): Glu-433 and Asp-457. Residues 456 to 457 and Arg-467 each bind phosphoenolpyruvate; that span reads ND. Residue Cys-504 is the Proton donor of the active site.

Belongs to the PEP-utilizing enzyme family. In terms of assembly, homodimer. It depends on Mg(2+) as a cofactor.

It localises to the cytoplasm. It catalyses the reaction L-histidyl-[protein] + phosphoenolpyruvate = N(pros)-phospho-L-histidyl-[protein] + pyruvate. Its function is as follows. General (non sugar-specific) component of the phosphoenolpyruvate-dependent sugar phosphotransferase system (sugar PTS). This major carbohydrate active-transport system catalyzes the phosphorylation of incoming sugar substrates concomitantly with their translocation across the cell membrane. Enzyme I transfers the phosphoryl group from phosphoenolpyruvate (PEP) to the phosphoryl carrier protein (HPr). This chain is Phosphoenolpyruvate-protein phosphotransferase (ptsI), found in Staphylococcus aureus (strain Mu50 / ATCC 700699).